A 66-amino-acid chain; its full sequence is DNA gyrase inhibitor YacG (66 aa).

Zn(2+)-binding residues include cysteine 9, cysteine 12, cysteine 28, and cysteine 32. Residues 45–66 (HKIAGSQESEDELYSGDLEPRH) are disordered.

The protein belongs to the DNA gyrase inhibitor YacG family. Interacts with GyrB. It depends on Zn(2+) as a cofactor.

Its function is as follows. Inhibits all the catalytic activities of DNA gyrase by preventing its interaction with DNA. Acts by binding directly to the C-terminal domain of GyrB, which probably disrupts DNA binding by the gyrase. This Pseudomonas putida (strain W619) protein is DNA gyrase inhibitor YacG.